We begin with the raw amino-acid sequence, 192 residues long: Lumican (192 aa).

9 LRR repeats span residues 1-23, 26-46, 47-68, 69-90, 94-114, 115-136, 139-162, 164-185, and 186-192; these read LQWLILDHNLLENSKIKGKVFSK, QLKKLHINHNNLTESVGPLPK, SLEDLQLTHNKITKLGSFDGLL, NLTFVHLQHNQLKEDAVSAAFK, SLEYLDLSFNQMSKLPSGLPA, SLLTLYLDNNKISDIPDEYFKR, GLQYLRLSHNELADSGIPGNSFNI, SLVELDLSYNKLKNIPTVNENL, and ENYYLEV.

Belongs to the small leucine-rich proteoglycan (SLRP) family. SLRP class II subfamily. As to quaternary structure, binds to laminin. Sulfated on tyrosine residue(s). In terms of processing, contains keratan sulfate.

The protein resides in the secreted. The protein localises to the extracellular space. It is found in the extracellular matrix. The polypeptide is Lumican (LUM) (Oryctolagus cuniculus (Rabbit)).